A 469-amino-acid chain; its full sequence is 3-isopropylmalate dehydratase large subunit (469 aa).

[4Fe-4S] cluster is bound by residues cysteine 349, cysteine 409, and cysteine 412. The segment at 424–443 is disordered; sequence QISASSSNRNFKGRQGSPSG.

The protein belongs to the aconitase/IPM isomerase family. LeuC type 1 subfamily. As to quaternary structure, heterodimer of LeuC and LeuD. The cofactor is [4Fe-4S] cluster.

It catalyses the reaction (2R,3S)-3-isopropylmalate = (2S)-2-isopropylmalate. Its pathway is amino-acid biosynthesis; L-leucine biosynthesis; L-leucine from 3-methyl-2-oxobutanoate: step 2/4. Its function is as follows. Catalyzes the isomerization between 2-isopropylmalate and 3-isopropylmalate, via the formation of 2-isopropylmaleate. The chain is 3-isopropylmalate dehydratase large subunit from Thermosynechococcus vestitus (strain NIES-2133 / IAM M-273 / BP-1).